Here is a 474-residue protein sequence, read N- to C-terminus: Protein IFIT1 homolog B (474 aa).

TPR repeat units lie at residues 52–85 (VGIHNLLAYVKHLKGQNEEALVSLKKAEDLIQKE), 95–128 (LVTWGNFAWVYYHMGRLAEAQTYLDKVENTCKKF), 141–174 (VDCEEGWALAKCGGKNYERAKTCFEKALEGNPEN), 182–216 (AITVYRLDKFNTASGRNKAFSLHVLKRAVRLNPDD), 218–250 (YIRVLLALKLQDEGQEAEGEKYIEEALTSISSQ), 251–284 (AYVFQYAAKFYRRKGSVDKALELLKMALETTPTS), 305–339 (ATNWQPRGQDRETVDRLVQLAICKFEKTIMLKRTF), 340–373 (EMAYVDLAETYAEIGHHRKAEEHFQKGLRMKIFE), 378–412 (QEIHYHYGRFQEHHGKSQDKAITHYLKGLKIEKMS), and 437–470 (VESVSLLGLIHKLKGEVSDALLCYERALRLAADL).

The protein belongs to the IFIT family.

Its function is as follows. IFIT1B is likely non-functional, lacking the critical antiviral role of IFIT1. Unlike IFIT1, which is essential in the innate immune response as part of an interferon-dependent multiprotein complex, IFIT1B does not prevent the translation of viral RNAs that lack host-specific 2'-O-methylation at their 5' cap. Consequently, it probably cannot inhibit their translation by competing with the host translation machinery. The polypeptide is Protein IFIT1 homolog B (Homo sapiens (Human)).